The following is a 308-amino-acid chain: MSEEKKYELWLDNYFFKPNFWQKCLAFVLLPLSVLYAFFAILNTFFRKKIVFKKPVISVGNLSFGGNGKTPLCKAIAREFDGVFIVLRGYKRKSKGLFVVKNQNEILCTLAQSGDEAMEYAFEENVKGVIVSEDRVKGIKKAFELGAKIVVLDDAFSKFHIKKFDILLESKIKPYFNFILPSGSYRLPKFYERRADFIALEGRDFLRYSFVKKNLKAVLVTAIAKPFRLYEHFIKARACYFFKDHYEFKKEELENLLKKHNCDTLMLTFKDFVKVKDFGFKCQIIELNIELKDSLREKIKTYIKEFEQ.

An ATP-binding site is contributed by 63-70 (SFGGNGKT).

The protein belongs to the LpxK family.

The catalysed reaction is a lipid A disaccharide + ATP = a lipid IVA + ADP + H(+). Its pathway is glycolipid biosynthesis; lipid IV(A) biosynthesis; lipid IV(A) from (3R)-3-hydroxytetradecanoyl-[acyl-carrier-protein] and UDP-N-acetyl-alpha-D-glucosamine: step 6/6. Its function is as follows. Transfers the gamma-phosphate of ATP to the 4'-position of a tetraacyldisaccharide 1-phosphate intermediate (termed DS-1-P) to form tetraacyldisaccharide 1,4'-bis-phosphate (lipid IVA). The chain is Tetraacyldisaccharide 4'-kinase from Campylobacter jejuni subsp. doylei (strain ATCC BAA-1458 / RM4099 / 269.97).